The following is a 111-amino-acid chain: MEAKAILRTARISPQKARLVADQVRGLSAERAVNLLKFSDKKAAHLIKKVVESAIANAENNQGADVDELKVKTIMVDEGPSLKRFMARAKGRGTRILKRTSHITVIVGAAK.

It belongs to the universal ribosomal protein uL22 family. As to quaternary structure, part of the 50S ribosomal subunit.

In terms of biological role, this protein binds specifically to 23S rRNA; its binding is stimulated by other ribosomal proteins, e.g. L4, L17, and L20. It is important during the early stages of 50S assembly. It makes multiple contacts with different domains of the 23S rRNA in the assembled 50S subunit and ribosome. The globular domain of the protein is located near the polypeptide exit tunnel on the outside of the subunit, while an extended beta-hairpin is found that lines the wall of the exit tunnel in the center of the 70S ribosome. The sequence is that of Large ribosomal subunit protein uL22 from Xanthomonas oryzae pv. oryzae (strain PXO99A).